A 495-amino-acid chain; its full sequence is Alpha-1B-glycoprotein (495 aa).

A signal peptide spans 1-21 (MSMLVVFLLLWGVTWGPVTEA). Ig-like V-type domains follow at residues 22–113 (AIFY…LTGP), 114–206 (KSLP…ELAA), 207–299 (PPPP…PVEL), 300–397 (ILSD…LHVD), and 398–495 (GPPP…VAES). Asn44 carries an N-linked (GlcNAc...) (complex) asparagine glycan. 5 disulfides stabilise this stretch: Cys49–Cys93, Cys139–Cys182, Cys232–Cys279, Cys325–Cys374, and Cys423–Cys470. Asn179 is a glycosylation site (N-linked (GlcNAc...) asparagine). N-linked (GlcNAc...) asparagine glycans are attached at residues Asn363 and Asn371.

In terms of assembly, interacts with CRISP3. In terms of tissue distribution, plasma.

Its subcellular location is the secreted. The chain is Alpha-1B-glycoprotein (A1BG) from Homo sapiens (Human).